The following is a 405-amino-acid chain: L-rhamnonate dehydratase (405 aa).

Residues His33 and Arg59 each coordinate substrate. The Mg(2+) site is built by Asp226, Glu252, and Glu280. The active-site Proton acceptor is the His329. Glu349 serves as a coordination point for substrate.

It belongs to the mandelate racemase/muconate lactonizing enzyme family. RhamD subfamily. In terms of assembly, homooctamer; tetramer of dimers. Requires Mg(2+) as cofactor.

It carries out the reaction L-rhamnonate = 2-dehydro-3-deoxy-L-rhamnonate + H2O. Its function is as follows. Catalyzes the dehydration of L-rhamnonate to 2-keto-3-deoxy-L-rhamnonate (KDR). This is L-rhamnonate dehydratase from Salmonella paratyphi C (strain RKS4594).